The following is a 370-amino-acid chain: Adaptive-response sensory kinase SasA (370 aa).

Positions 152–365 (MVAHELRTPL…CFYLTVPVWQ (214 aa)) constitute a Histidine kinase domain. His-155 bears the Phosphohistidine; by autocatalysis mark.

In terms of assembly, homooligomerizes. Interacts with KaiC. Participates in the KaiBC complex, whose core is composed of a KaiC homohexamer and 6 KaiB.

It catalyses the reaction ATP + protein L-histidine = ADP + protein N-phospho-L-histidine.. In terms of biological role, member of the two-component regulatory system SasA/RpaA involved in genome-wide circadian gene expression. One of several clock output pathways. Participates in the Kai clock protein complex, the main circadian regulator in cyanobacteria, via its interaction with KaiC. KaiC enhances the autophosphorylation activity of SasA, which then transfers its phosphate group to RpaA to activate it. In addition to its output function, recruits fold-shifted KaiB (KaiB(fs)) to KaiC to cooperatively form the KaiB(6):KaiC(6) complex (independent of SasA kinase activity). Required for robustness of the circadian rhythm of gene expression and is involved in clock output, also required for adaptation to light/dark cycles. The chain is Adaptive-response sensory kinase SasA from Prochlorococcus marinus (strain MIT 9303).